Reading from the N-terminus, the 264-residue chain is UPF0162 protein PM0557 (264 aa).

The protein belongs to the UPF0162 family.

This is UPF0162 protein PM0557 from Pasteurella multocida (strain Pm70).